The primary structure comprises 82 residues: Cytochrome c-551 (82 aa).

4 residues coordinate heme c: Cys-12, Cys-15, His-16, and Met-61.

In terms of processing, binds 1 heme c group covalently per subunit.

Its function is as follows. This is a prokaryotic monoheme cytochrome, unreactive with mitochondrial cytochrome C oxidase or reductase. It functions in nitrite and nitrate respiration in Pseudomonas, but it is also found in other bacteria. The protein is Cytochrome c-551 of Pseudomonas denitrificans.